We begin with the raw amino-acid sequence, 356 residues long: Phosphate acyltransferase (356 aa).

It belongs to the PlsX family. As to quaternary structure, homodimer. Probably interacts with PlsY.

It is found in the cytoplasm. The catalysed reaction is a fatty acyl-[ACP] + phosphate = an acyl phosphate + holo-[ACP]. It participates in lipid metabolism; phospholipid metabolism. Its function is as follows. Catalyzes the reversible formation of acyl-phosphate (acyl-PO(4)) from acyl-[acyl-carrier-protein] (acyl-ACP). This enzyme utilizes acyl-ACP as fatty acyl donor, but not acyl-CoA. This Xanthobacter autotrophicus (strain ATCC BAA-1158 / Py2) protein is Phosphate acyltransferase.